The primary structure comprises 370 residues: Type II restriction enzyme MjaII (370 aa).

It belongs to the TdeIII type II restriction endonuclease family.

It carries out the reaction Endonucleolytic cleavage of DNA to give specific double-stranded fragments with terminal 5'-phosphates.. Its function is as follows. A P subtype restriction enzyme that recognizes the double-stranded sequence 5'-GGNCC-3'; the cleavage site is unknown. The protein is Type II restriction enzyme MjaII (mjaIIR) of Methanocaldococcus jannaschii (strain ATCC 43067 / DSM 2661 / JAL-1 / JCM 10045 / NBRC 100440) (Methanococcus jannaschii).